The primary structure comprises 356 residues: Histidinol-phosphate aminotransferase (356 aa).

Residue Lys-214 is modified to N6-(pyridoxal phosphate)lysine.

Belongs to the class-II pyridoxal-phosphate-dependent aminotransferase family. Histidinol-phosphate aminotransferase subfamily. In terms of assembly, homodimer. Pyridoxal 5'-phosphate serves as cofactor.

It catalyses the reaction L-histidinol phosphate + 2-oxoglutarate = 3-(imidazol-4-yl)-2-oxopropyl phosphate + L-glutamate. It participates in amino-acid biosynthesis; L-histidine biosynthesis; L-histidine from 5-phospho-alpha-D-ribose 1-diphosphate: step 7/9. This chain is Histidinol-phosphate aminotransferase, found in Escherichia coli (strain SMS-3-5 / SECEC).